We begin with the raw amino-acid sequence, 881 residues long: Alanine--tRNA ligase (881 aa).

The protein belongs to the class-II aminoacyl-tRNA synthetase family.

Its subcellular location is the cytoplasm. It catalyses the reaction tRNA(Ala) + L-alanine + ATP = L-alanyl-tRNA(Ala) + AMP + diphosphate. Its function is as follows. Catalyzes the attachment of alanine to tRNA(Ala) in a two-step reaction: alanine is first activated by ATP to form Ala-AMP and then transferred to the acceptor end of tRNA(Ala). Also edits incorrectly charged Ser-tRNA(Ala) and Gly-tRNA(Ala) via its editing domain. This chain is Alanine--tRNA ligase (alaS), found in Lacticaseibacillus paracasei (strain ATCC 334 / BCRC 17002 / CCUG 31169 / CIP 107868 / KCTC 3260 / NRRL B-441) (Lactobacillus paracasei).